A 129-amino-acid chain; its full sequence is uncharacterized protein (129 aa).

The segment covering 86–96 has biased composition (acidic residues); that stretch reads NDGFSSDDEPE. Residues 86–129 are disordered; it reads NDGFSSDDEPEEHVILTEDNQGEPSETPQATFDITEFIKTEDED. A compositionally biased stretch (polar residues) spans 103-117; sequence EDNQGEPSETPQATF.

It belongs to the asfivirus D129L family.

This is an uncharacterized protein from African swine fever virus (isolate Tick/South Africa/Pretoriuskop Pr4/1996) (ASFV).